A 446-amino-acid chain; its full sequence is ATP synthase subunit b-delta (446 aa).

The segment at 1-168 (MSTFIGQLFG…PATADVDYPL (168 aa)) is ATP synthase subunit b. The helical transmembrane segment at 4-24 (FIGQLFGFAVIVYLVWRFIVP) threads the bilayer. The segment at 169–446 (LAKMRSASRR…LAAAEARLPD (278 aa)) is ATP synthase subunit delta.

In the N-terminal section; belongs to the ATPase B chain family. This sequence in the C-terminal section; belongs to the ATPase delta chain family. F-type ATPases have 2 components, F(1) - the catalytic core - and F(0) - the membrane proton channel. F(1) has five subunits: alpha(3), beta(3), gamma(1), delta(1), epsilon(1). F(0) has three main subunits: a(1), b(2) and c(10-14). The alpha and beta chains form an alternating ring which encloses part of the gamma chain. F(1) is attached to F(0) by a central stalk formed by the gamma and epsilon chains, while a peripheral stalk is formed by the delta and b chains.

The protein resides in the cell membrane. Its function is as follows. F(1)F(0) ATP synthase produces ATP from ADP in the presence of a proton or sodium gradient. F-type ATPases consist of two structural domains, F(1) containing the extramembraneous catalytic core and F(0) containing the membrane proton channel, linked together by a central stalk and a peripheral stalk. During catalysis, ATP synthesis in the catalytic domain of F(1) is coupled via a rotary mechanism of the central stalk subunits to proton translocation. Functionally, this fusion protein includes a component of the F(0) channel (subunit b) and of the F(1) subunit (subunit delta). Two copies of subunit b and one of delta together form the peripheral 'stator' stalk which links F(1) to F(0). This chain is ATP synthase subunit b-delta (atpFH), found in Mycobacterium bovis (strain ATCC BAA-935 / AF2122/97).